A 198-amino-acid chain; its full sequence is Elongation factor Ts (198 aa).

The involved in Mg(2+) ion dislocation from EF-Tu stretch occupies residues Ser82–Val85.

It belongs to the EF-Ts family.

It localises to the cytoplasm. Its function is as follows. Associates with the EF-Tu.GDP complex and induces the exchange of GDP to GTP. It remains bound to the aminoacyl-tRNA.EF-Tu.GTP complex up to the GTP hydrolysis stage on the ribosome. The polypeptide is Elongation factor Ts (Desulfosudis oleivorans (strain DSM 6200 / JCM 39069 / Hxd3) (Desulfococcus oleovorans)).